Consider the following 185-residue polypeptide: Elongation factor P (185 aa).

Belongs to the elongation factor P family.

The protein resides in the cytoplasm. It functions in the pathway protein biosynthesis; polypeptide chain elongation. Functionally, involved in peptide bond synthesis. Stimulates efficient translation and peptide-bond synthesis on native or reconstituted 70S ribosomes in vitro. Probably functions indirectly by altering the affinity of the ribosome for aminoacyl-tRNA, thus increasing their reactivity as acceptors for peptidyl transferase. The sequence is that of Elongation factor P from Mesomycoplasma hyopneumoniae (strain 7448) (Mycoplasma hyopneumoniae).